Reading from the N-terminus, the 85-residue chain is Large ribosomal subunit protein bL27 (85 aa).

A disordered region spans residues Met-1–Leu-21.

This sequence belongs to the bacterial ribosomal protein bL27 family.

The protein is Large ribosomal subunit protein bL27 of Erwinia tasmaniensis (strain DSM 17950 / CFBP 7177 / CIP 109463 / NCPPB 4357 / Et1/99).